A 443-amino-acid polypeptide reads, in one-letter code: Tryptophan synthase beta chain 2, chloroplastic (443 aa).

The interval 1 to 32 (PGPPPPAPEGRRRRGRGRNAAGQAVAAEASPA) is disordered. The transit peptide at 1–45 (PGPPPPAPEGRRRRGRGRNAAGQAVAAEASPAAVEMGNGAAAPGL) directs the protein to the chloroplast. Positions 18–32 (RNAAGQAVAAEASPA) are enriched in low complexity. Lys-138 is modified (N6-(pyridoxal phosphate)lysine).

The protein belongs to the TrpB family. As to quaternary structure, tetramer of two alpha and two beta chains. Pyridoxal 5'-phosphate is required as a cofactor.

The protein resides in the plastid. It is found in the chloroplast. The enzyme catalyses (1S,2R)-1-C-(indol-3-yl)glycerol 3-phosphate + L-serine = D-glyceraldehyde 3-phosphate + L-tryptophan + H2O. The protein operates within amino-acid biosynthesis; L-tryptophan biosynthesis; L-tryptophan from chorismate: step 5/5. Its function is as follows. The beta subunit is responsible for the synthesis of L-tryptophan from indole and L-serine. This chain is Tryptophan synthase beta chain 2, chloroplastic (TSB2), found in Zea mays (Maize).